Here is a 323-residue protein sequence, read N- to C-terminus: Peroxisomal targeting signal 2 receptor (323 aa).

WD repeat units follow at residues 65-96 (DWNDGLFDVTWSENNEHVLITCSGDGSLQLWD), 109-141 (EHAQEVYSVDWSQTRGEQLVVSGSWDQTVKLWD), 153-184 (GHESIIYSTIWSPHIPGCFASASGDQTLRIWD), 196-227 (AHQAEILSCDWCKYNENLLVTGAVDCSLRGWD), 240-271 (GHTYAIRRVKFSPFHASVLASCSYDFTVRFWN), and 284-315 (HHTEFTCGLDFSLQSPTQVADCSWDETIKIYD).

The protein belongs to the WD repeat peroxin-7 family. In terms of assembly, interacts with PEX5; interaction only takes place when PEX7 is associated with cargo proteins. Interacts with VWA8. Ubiquitous. Highest expression in pancreas, skeletal muscle and heart.

It localises to the cytoplasm. The protein localises to the cytosol. Its subcellular location is the peroxisome matrix. Its function is as follows. Receptor required for the peroxisomal import of proteins containing a C-terminal PTS2-type peroxisomal targeting signal. Specifically binds to cargo proteins containing a PTS2 peroxisomal targeting signal in the cytosol. Cargo protein-binding triggers interaction with PEX5 and formation of a ternary complex composed of PEX5 and PEX7 along with PTS2-containing cargo proteins, which is tranlocated into peroxisomes by passing through the PEX13-PEX14 docking complex. In Homo sapiens (Human), this protein is Peroxisomal targeting signal 2 receptor.